Here is a 640-residue protein sequence, read N- to C-terminus: Chaperone protein HtpG (640 aa).

The tract at residues 1 to 348 (MAQYKFETEV…SEDLPLNVSR (348 aa)) is a; substrate-binding. The b stretch occupies residues 349 to 565 (EILQQNRILS…ETDPSLQMER (217 aa)). The tract at residues 566-640 (MMRAMGQFNT…RLNRLMTNLK (75 aa)) is c.

It belongs to the heat shock protein 90 family. Homodimer.

The protein resides in the cytoplasm. Its function is as follows. Molecular chaperone. Has ATPase activity. The sequence is that of Chaperone protein HtpG from Treponema denticola (strain ATCC 35405 / DSM 14222 / CIP 103919 / JCM 8153 / KCTC 15104).